The primary structure comprises 733 residues: Acyl-coenzyme A oxidase (733 aa).

Belongs to the acyl-CoA oxidase family. FAD is required as a cofactor.

Its subcellular location is the peroxisome. It catalyses the reaction a 2,3-saturated acyl-CoA + O2 = a (2E)-enoyl-CoA + H2O2. It participates in lipid metabolism; peroxisomal fatty acid beta-oxidation. The sequence is that of Acyl-coenzyme A oxidase (POX1) from Eremothecium gossypii (strain ATCC 10895 / CBS 109.51 / FGSC 9923 / NRRL Y-1056) (Yeast).